Here is an 82-residue protein sequence, read N- to C-terminus: Sec-independent protein translocase protein TatA (82 aa).

The chain crosses the membrane as a helical span at residues 1–21; the sequence is MGIFDWKHWIVILIVVVLVFG. The tract at residues 43–82 is disordered; the sequence is VNTEEDDKKEQPAAQPAQPLNQPHTIDAQAQKVEEPARKD.

It belongs to the TatA/E family. The Tat system comprises two distinct complexes: a TatABC complex, containing multiple copies of TatA, TatB and TatC subunits, and a separate TatA complex, containing only TatA subunits. Substrates initially bind to the TatABC complex, which probably triggers association of the separate TatA complex to form the active translocon.

Its subcellular location is the cell inner membrane. Functionally, part of the twin-arginine translocation (Tat) system that transports large folded proteins containing a characteristic twin-arginine motif in their signal peptide across membranes. TatA could form the protein-conducting channel of the Tat system. The chain is Sec-independent protein translocase protein TatA from Pseudomonas paraeruginosa (strain DSM 24068 / PA7) (Pseudomonas aeruginosa (strain PA7)).